A 315-amino-acid chain; its full sequence is Ribosomal RNA small subunit methyltransferase H (315 aa).

Residues 37-39 (GGH), D57, L91, D105, and Q112 contribute to the S-adenosyl-L-methionine site.

Belongs to the methyltransferase superfamily. RsmH family.

The protein resides in the cytoplasm. It carries out the reaction cytidine(1402) in 16S rRNA + S-adenosyl-L-methionine = N(4)-methylcytidine(1402) in 16S rRNA + S-adenosyl-L-homocysteine + H(+). Specifically methylates the N4 position of cytidine in position 1402 (C1402) of 16S rRNA. This chain is Ribosomal RNA small subunit methyltransferase H, found in Syntrophus aciditrophicus (strain SB).